A 596-amino-acid chain; its full sequence is MVMAQKLKEAEITEQDSLLLTRNLLRIAIFNISYIRGLFPEKYFNDKSVPALDMKIKKLMPMDAESRRLIDWMEKGVYDALQRKYLKTLMFSICETVDGPMIEEYSFSFSYSDSDSQDVMMNINRTGNKKNGGIFNSTADITPNQMRSSACKMVRTLVQLMRTLDKMPDERTIVMKLLYYDDVTPPDYEPPFFRGCTEDEAQYVWTKNPLRMEIGNVNSKHLVLTLKVKSVLDPCEDENDDMQDDGKSIGPDSVHDDQPSDSDSEISQTQENQFIVAPVEKQDDDDGEVDEDDNTQDPAENEQQLARVKDWINSRHLDTLELTDILANFPDISIVLSEEIMDQLVTEGVLSKTGKDMYIKKRDKTPESEFTFVKEEADGQISPGKSVAPEDYLYMKALYHSLPMKYVTITKLHNMLDGEANQTAVRKLMDRMTQEGYVEASSNRRLGKRVIHSSLTEKKLNEVRKVLATDDMDVDVTETINKTNGPDAKVTADVSTCGGIHSIGSDFTRTKGRSGGMQQNGSVLSEQTISKAGNTPISNKAQPAASRESFAVHGGAVKEAETVNCSQASQDRRGRKTSMVREPILQYSKRQKSQAN.

Residues 15-228 enclose the HORMA domain; that stretch reads QDSLLLTRNL…SKHLVLTLKV (214 aa). The segment at 235 to 303 is disordered; sequence CEDENDDMQD…NTQDPAENEQ (69 aa). Residues 282–295 show a composition bias toward acidic residues; the sequence is QDDDDGEVDEDDNT. An SWIRM domain is found at 351–449; the sequence is SKTGKDMYIK…ASSNRRLGKR (99 aa). The interval 562–596 is disordered; it reads TVNCSQASQDRRGRKTSMVREPILQYSKRQKSQAN.

As to quaternary structure, interacts with ASY3.

The protein localises to the chromosome. It localises to the nucleus. Required for normal meiosis in male and female gametophytes. Plays a crucial role in coordinating the activity of DMC1, a key member of the homologous recombination machinery. Acts at the interface between the developing chromosome axes and the recombination machinery to ensure DMC1-mediated interhomolog recombination. The chain is Meiosis-specific protein ASY1 from Arabidopsis thaliana (Mouse-ear cress).